An 836-amino-acid chain; its full sequence is Translation initiation factor IF-2 (836 aa).

Residues 1–233 (MSDTDGKKPL…RSLAAMKRKQ (233 aa)) are disordered. Residues 18 to 27 (SGQVKQSFSH) are compositionally biased toward polar residues. A compositionally biased stretch (low complexity) spans 50–60 (SGSSTTTSSPS). Over residues 88–156 (KLREVEDAKR…AARRAEEAKR (69 aa)) the composition is skewed to basic and acidic residues. Residues 167–176 (PAESRASAPP) show a composition bias toward low complexity. Positions 185–206 (SRKEREREADRDRTTKKDDSRR) are enriched in basic and acidic residues. The 169-residue stretch at 333 to 501 (PRPPIITIMG…NIALQAEILD (169 aa)) folds into the tr-type G domain. Residues 342 to 349 (GHVDHGKT) form a G1 region. A GTP-binding site is contributed by 342-349 (GHVDHGKT). Residues 367 to 371 (GITQH) form a G2 region. Residues 389-392 (DTPG) are G3. Residues 389-393 (DTPGH) and 443-446 (NKID) contribute to the GTP site. The segment at 443-446 (NKID) is G4. The tract at residues 479-481 (SAK) is G5.

Belongs to the TRAFAC class translation factor GTPase superfamily. Classic translation factor GTPase family. IF-2 subfamily.

Its subcellular location is the cytoplasm. In terms of biological role, one of the essential components for the initiation of protein synthesis. Protects formylmethionyl-tRNA from spontaneous hydrolysis and promotes its binding to the 30S ribosomal subunits. Also involved in the hydrolysis of GTP during the formation of the 70S ribosomal complex. In Cereibacter sphaeroides (strain ATCC 17023 / DSM 158 / JCM 6121 / CCUG 31486 / LMG 2827 / NBRC 12203 / NCIMB 8253 / ATH 2.4.1.) (Rhodobacter sphaeroides), this protein is Translation initiation factor IF-2.